Reading from the N-terminus, the 165-residue chain is 3-isopropylmalate dehydratase small subunit (165 aa).

It belongs to the LeuD family. LeuD type 2 subfamily. As to quaternary structure, heterodimer of LeuC and LeuD.

It catalyses the reaction (2R,3S)-3-isopropylmalate = (2S)-2-isopropylmalate. The protein operates within amino-acid biosynthesis; L-leucine biosynthesis; L-leucine from 3-methyl-2-oxobutanoate: step 2/4. Catalyzes the isomerization between 2-isopropylmalate and 3-isopropylmalate, via the formation of 2-isopropylmaleate. The sequence is that of 3-isopropylmalate dehydratase small subunit from Helicobacter hepaticus (strain ATCC 51449 / 3B1).